Reading from the N-terminus, the 427-residue chain is TNF receptor-associated factor family protein DDB_G0285149 (427 aa).

The RING-type zinc-finger motif lies at 20–65 (CIVCTDLLSESHDKIQVNQCPHGHCLCSDCWTKQIENKKKECPICR). 2 consecutive TRAF-type zinc fingers follow at residues 122–178 (THFK…INKD) and 178–234 (DHLE…KHQA). The MATH domain occupies 284-415 (KYSNQWVIEN…GNKLTIKFEI (132 aa)).

The protein belongs to the TNF receptor-associated factor family. A subfamily.

It localises to the cytoplasm. Probable adapter protein and signal transducer that links members of the tumor necrosis factor receptor family to different signaling pathways by association with the receptor cytoplasmic domain and kinases. In Dictyostelium discoideum (Social amoeba), this protein is TNF receptor-associated factor family protein DDB_G0285149.